The sequence spans 330 residues: Malate dehydrogenase (330 aa).

Position 11–17 (11–17 (GGAGQIA)) interacts with NAD(+). Substrate-binding residues include R92 and R98. NAD(+) is bound by residues N105, Q112, and 129–131 (VGN). The substrate site is built by N131 and R162. The active-site Proton acceptor is the H187.

The protein belongs to the LDH/MDH superfamily. MDH type 2 family.

It carries out the reaction (S)-malate + NAD(+) = oxaloacetate + NADH + H(+). Functionally, catalyzes the reversible oxidation of malate to oxaloacetate. This chain is Malate dehydrogenase, found in Protochlamydia amoebophila (strain UWE25).